The sequence spans 124 residues: MNLIQTLEAEQIAKLQEQKSIPDFRAGDTLKVGVRVVEGERIRIQFYEGVCIARSNKAIGSSFTVRKISFGEGVERVFPLYSPNVDSIEVVRRGVVRRAKLYYLRGRRGKAARIAERRDVRPSK.

The protein belongs to the bacterial ribosomal protein bL19 family.

Its function is as follows. This protein is located at the 30S-50S ribosomal subunit interface and may play a role in the structure and function of the aminoacyl-tRNA binding site. The protein is Large ribosomal subunit protein bL19 of Zymomonas mobilis subsp. mobilis (strain ATCC 31821 / ZM4 / CP4).